The chain runs to 308 residues: Probable GTP 3',8-cyclase (308 aa).

One can recognise a Radical SAM core domain in the interval 4–224 (RFGRPLEDLR…QIRKKHFRPR (221 aa)). R13 contacts GTP. Positions 20, 24, and 27 each coordinate [4Fe-4S] cluster. Position 60 (K60) interacts with GTP. G64 contacts S-adenosyl-L-methionine. T90 serves as a coordination point for GTP. An S-adenosyl-L-methionine-binding site is contributed by S114. K151 is a binding site for GTP. [4Fe-4S] cluster-binding residues include C245 and C248. 250–252 (RIR) contacts GTP. C262 is a binding site for [4Fe-4S] cluster.

Belongs to the radical SAM superfamily. MoaA family. The cofactor is [4Fe-4S] cluster.

It carries out the reaction GTP + AH2 + S-adenosyl-L-methionine = (8S)-3',8-cyclo-7,8-dihydroguanosine 5'-triphosphate + 5'-deoxyadenosine + L-methionine + A + H(+). It participates in cofactor biosynthesis; molybdopterin biosynthesis. In terms of biological role, catalyzes the cyclization of GTP to (8S)-3',8-cyclo-7,8-dihydroguanosine 5'-triphosphate. The protein is Probable GTP 3',8-cyclase of Saccharolobus islandicus (strain M.16.27) (Sulfolobus islandicus).